The following is a 208-amino-acid chain: Outer-membrane lipoprotein carrier protein (208 aa).

The first 21 residues, 1–21 (MKKLNTLLLVLGSLVATPSFA), serve as a signal peptide directing secretion. The disordered stretch occupies residues 188 to 208 (KSTFEFTPPEGVEIDDQSNGE). The span at 199–208 (VEIDDQSNGE) shows a compositional bias: acidic residues.

It belongs to the LolA family. As to quaternary structure, monomer.

The protein localises to the periplasm. Functionally, participates in the translocation of lipoproteins from the inner membrane to the outer membrane. Only forms a complex with a lipoprotein if the residue after the N-terminal Cys is not an aspartate (The Asp acts as a targeting signal to indicate that the lipoprotein should stay in the inner membrane). In Pseudoalteromonas translucida (strain TAC 125), this protein is Outer-membrane lipoprotein carrier protein.